Here is a 99-residue protein sequence, read N- to C-terminus: Large ribosomal subunit protein uL23 (99 aa).

The protein belongs to the universal ribosomal protein uL23 family. In terms of assembly, part of the 50S ribosomal subunit. Contacts protein L29, and trigger factor when it is bound to the ribosome.

Functionally, one of the early assembly proteins it binds 23S rRNA. One of the proteins that surrounds the polypeptide exit tunnel on the outside of the ribosome. Forms the main docking site for trigger factor binding to the ribosome. The sequence is that of Large ribosomal subunit protein uL23 from Francisella tularensis subsp. tularensis (strain SCHU S4 / Schu 4).